The sequence spans 539 residues: MWSGRSSFTSLVVGVFLVYVVHTCWVMYGIVYTRPCSGDSNCIQPYLALRPKLQLSVYTTTRSSLGAENNVDLILNVEDFDVDSKFERTVNVSVPKKTRNNGTLYAYIFLHHAGILPWQDGKQVHVVSTLTTYMIPKPEEINLLTGESATQQQIEAEKKPSNALDEPVSHWRPRLTLNVMVDDFVFDGSSLPADVHRYMKMIQLGKTVHYLPILFIDQLSNRVKDLMVINRSTTELPLTVSYDKISLGRLRFWIHMQDAVYSLQQFGFSEKDADELKGIFVDTNLYLLALTFFVAAFHLLFDFLAFKSDISFWKKKKSMIGMSTKAVLWRCFSTVVIFLFLLDEQTSLLVLIPAGVGAAIELWKVKKALKITVAWRGLRPVFQFGTHSESERKTEKYDAQAMKYLSYLLYPLCVGGAVYSLLNIKYKSWYSWLINSFVNGVYAFGFLFMLPQLFVNYKMKSVAHLPWKAFTYKAFNTFIDDVFAFIITMPTSHRLACFRDDVVFLVYLYQRWLYPVDKSRVNEFGESYEEQPKRKPHPD.

The Cytoplasmic portion of the chain corresponds to 1-10 (MWSGRSSFTS). A helical membrane pass occupies residues 11-31 (LVVGVFLVYVVHTCWVMYGIV). The Extracellular portion of the chain corresponds to 32–285 (YTRPCSGDSN…LKGIFVDTNL (254 aa)). 2 N-linked (GlcNAc...) asparagine glycosylation sites follow: Asn91 and Asn101. Residues 286–306 (YLLALTFFVAAFHLLFDFLAF) form a helical membrane-spanning segment. The Cytoplasmic segment spans residues 307–325 (KSDISFWKKKKSMIGMSTK). A helical membrane pass occupies residues 326–342 (AVLWRCFSTVVIFLFLL). Topologically, residues 343–403 (DEQTSLLVLI…TEKYDAQAMK (61 aa)) are extracellular. Residues 404 to 424 (YLSYLLYPLCVGGAVYSLLNI) traverse the membrane as a helical segment. Residues 425–429 (KYKSW) are Cytoplasmic-facing. The helical transmembrane segment at 430-450 (YSWLINSFVNGVYAFGFLFML) threads the bilayer. The Extracellular segment spans residues 451-539 (PQLFVNYKMK…EQPKRKPHPD (89 aa)).

Belongs to the CLPTM1 family.

It is found in the endoplasmic reticulum membrane. It catalyses the reaction a 6-(alpha-D-glucosaminyl)-1-(1,2-diacyl-sn-glycero-3-phospho)-1D-myo-inositol(in) = a 6-(alpha-D-glucosaminyl)-1-(1,2-diacyl-sn-glycero-3-phospho)-1D-myo-inositol(out). The catalysed reaction is 6-(alpha-D-glucosaminyl)-(1-octadecanoyl,2-(9Z)-octadecenoyl-sn-glycero-3-phospho)-1D-myo-inositol(in) = 6-(alpha-D-glucosaminyl)-(1-octadecanoyl,2-(9Z)-octadecenoyl-sn-glycero-3-phospho)-1D-myo-inositol(out). The enzyme catalyses a 1,2-diacyl-sn-glycero-3-phospho-(1D-myo-inositol)(in) = a 1,2-diacyl-sn-glycero-3-phospho-(1D-myo-inositol)(out). It carries out the reaction a 1,2-diacyl-sn-glycero-3-phosphocholine(in) = a 1,2-diacyl-sn-glycero-3-phosphocholine(out). It catalyses the reaction a 1,2-diacyl-sn-glycero-3-phosphoethanolamine(in) = a 1,2-diacyl-sn-glycero-3-phosphoethanolamine(out). Functionally, scramblase that mediates the translocation of glucosaminylphosphatidylinositol (alpha-D-GlcN-(1-6)-(1,2-diacyl-sn-glycero-3-phospho)-1D-myo-inositol, GlcN-PI) across the endoplasmic reticulum (ER) membrane, from the cytosolic leaflet to the luminal leaflet of the ER membrane, where it participates in the biosynthesis of glycosylphosphatidylinositol (GPI). GPI is a lipid glycoconjugate involved in post-translational modification of proteins. Can also translocate 1,2-diacyl-sn-glycero-3-phospho-(1D-myo-inositol) (phosphatidylinositol or PI), as well as several other phospholipids (1,2-diacyl-sn-glycero-3-phosphocholine, 1,2-diacyl-sn-glycero-3-phosphoethanolamine), and N-acetylglucosaminylphosphatidylinositol (GlcNAc-PI) in vitro. The chain is Lipid scramblase CLPTM1L (Clptm1l) from Mus musculus (Mouse).